Consider the following 337-residue polypeptide: RNA 3'-terminal phosphate cyclase (337 aa).

ATP is bound by residues Gln101 and 282–285; that span reads HMSD. His306 (tele-AMP-histidine intermediate) is an active-site residue.

It belongs to the RNA 3'-terminal cyclase family. Type 1 subfamily.

It localises to the cytoplasm. The catalysed reaction is a 3'-end 3'-phospho-ribonucleotide-RNA + ATP = a 3'-end 2',3'-cyclophospho-ribonucleotide-RNA + AMP + diphosphate. Its function is as follows. Catalyzes the conversion of 3'-phosphate to a 2',3'-cyclic phosphodiester at the end of RNA. The mechanism of action of the enzyme occurs in 3 steps: (A) adenylation of the enzyme by ATP; (B) transfer of adenylate to an RNA-N3'P to produce RNA-N3'PP5'A; (C) and attack of the adjacent 2'-hydroxyl on the 3'-phosphorus in the diester linkage to produce the cyclic end product. The biological role of this enzyme is unknown but it is likely to function in some aspects of cellular RNA processing. The protein is RNA 3'-terminal phosphate cyclase of Saccharolobus islandicus (strain M.16.27) (Sulfolobus islandicus).